The primary structure comprises 187 residues: UPF0301 protein YqgE (187 aa).

The protein belongs to the UPF0301 (AlgH) family.

This is UPF0301 protein YqgE from Escherichia coli O139:H28 (strain E24377A / ETEC).